The primary structure comprises 84 residues: Small ribosomal subunit protein uS17 (84 aa).

It belongs to the universal ribosomal protein uS17 family. As to quaternary structure, part of the 30S ribosomal subunit.

Its function is as follows. One of the primary rRNA binding proteins, it binds specifically to the 5'-end of 16S ribosomal RNA. The protein is Small ribosomal subunit protein uS17 of Borrelia garinii subsp. bavariensis (strain ATCC BAA-2496 / DSM 23469 / PBi) (Borreliella bavariensis).